Reading from the N-terminus, the 70-residue chain is Large ribosomal subunit protein uL29 (70 aa).

The protein belongs to the universal ribosomal protein uL29 family.

This Clostridium botulinum (strain Alaska E43 / Type E3) protein is Large ribosomal subunit protein uL29.